The chain runs to 247 residues: NH(3)-dependent NAD(+) synthetase (247 aa).

29–36 lines the ATP pocket; it reads GLSGGVDS. A Mg(2+)-binding site is contributed by Asp-35. Residue Arg-112 coordinates deamido-NAD(+). An ATP-binding site is contributed by Thr-132. Glu-137 contacts Mg(2+). Deamido-NAD(+) contacts are provided by Lys-145 and Asp-152. Lys-161 and Ser-183 together coordinate ATP. A deamido-NAD(+)-binding site is contributed by 233 to 234; the sequence is HK.

The protein belongs to the NAD synthetase family. As to quaternary structure, homodimer.

It carries out the reaction deamido-NAD(+) + NH4(+) + ATP = AMP + diphosphate + NAD(+) + H(+). The protein operates within cofactor biosynthesis; NAD(+) biosynthesis; NAD(+) from deamido-NAD(+) (ammonia route): step 1/1. Catalyzes the ATP-dependent amidation of deamido-NAD to form NAD. Uses ammonia as a nitrogen source. In Archaeoglobus fulgidus (strain ATCC 49558 / DSM 4304 / JCM 9628 / NBRC 100126 / VC-16), this protein is NH(3)-dependent NAD(+) synthetase.